The chain runs to 349 residues: Probable trehalose-phosphate phosphatase H (349 aa).

This sequence belongs to the trehalose phosphatase family. The cofactor is a divalent metal cation.

The catalysed reaction is alpha,alpha-trehalose 6-phosphate + H2O = alpha,alpha-trehalose + phosphate. It participates in glycan biosynthesis; trehalose biosynthesis. Its function is as follows. Removes the phosphate from trehalose 6-phosphate to produce free trehalose. Trehalose accumulation in plant may improve abiotic stress tolerance. The sequence is that of Probable trehalose-phosphate phosphatase H (TPPH) from Arabidopsis thaliana (Mouse-ear cress).